We begin with the raw amino-acid sequence, 51 residues long: Large ribosomal subunit protein bL33 (51 aa).

The tract at residues M1–K23 is disordered. Polar residues predominate over residues S10–T20.

This sequence belongs to the bacterial ribosomal protein bL33 family.

The sequence is that of Large ribosomal subunit protein bL33 from Chromobacterium violaceum (strain ATCC 12472 / DSM 30191 / JCM 1249 / CCUG 213 / NBRC 12614 / NCIMB 9131 / NCTC 9757 / MK).